The chain runs to 378 residues: Erythronate-4-phosphate dehydrogenase (378 aa).

Substrate is bound by residues Ser-45 and Thr-66. Asp-146 and Thr-175 together coordinate NAD(+). Arg-208 is a catalytic residue. An NAD(+)-binding site is contributed by Asp-232. Residue Glu-237 is part of the active site. His-254 (proton donor) is an active-site residue. Gly-257 is an NAD(+) binding site. Tyr-258 is a binding site for substrate.

Belongs to the D-isomer specific 2-hydroxyacid dehydrogenase family. PdxB subfamily. In terms of assembly, homodimer.

It is found in the cytoplasm. The enzyme catalyses 4-phospho-D-erythronate + NAD(+) = (R)-3-hydroxy-2-oxo-4-phosphooxybutanoate + NADH + H(+). It participates in cofactor biosynthesis; pyridoxine 5'-phosphate biosynthesis; pyridoxine 5'-phosphate from D-erythrose 4-phosphate: step 2/5. Catalyzes the oxidation of erythronate-4-phosphate to 3-hydroxy-2-oxo-4-phosphonooxybutanoate. In Escherichia coli O8 (strain IAI1), this protein is Erythronate-4-phosphate dehydrogenase.